The chain runs to 430 residues: Microtubule-associated protein tau (430 aa).

The segment covering 1 to 16 (MAEPRQEFDTAEDHAE) has biased composition (basic and acidic residues). The tract at residues 1-245 (MAEPRQEFDT…PVPMPDLKNV (245 aa)) is disordered. The residue at position 2 (A2) is an N-acetylalanine. Y18 bears the Phosphotyrosine mark. A Glycyl lysine isopeptide (Lys-Gly) (interchain with G-Cter in ubiquitin) cross-link involves residue K31. A phosphoserine mark is found at S33 and S48. The span at 48 to 58 (SETSDAKSTPT) shows a compositional bias: polar residues. T56, T58, and T98 each carry phosphothreonine. Residues 117-133 (KGKEGTGSEDRKAKGAD) show a composition bias toward basic and acidic residues. T142 carries the post-translational modification Phosphothreonine. R144 carries the post-translational modification Omega-N-methylarginine. K152 carries the post-translational modification N6,N6-dimethyllysine; alternate. K152 is modified (N6-acetyllysine; alternate). Phosphothreonine occurs at positions 158, 164, 165, and 170. Residues 161–203 (PAKTTPSPKTPPGTGEPAKSGDRSGYSSPGSPGTPGSRSRTPS) show a composition bias toward low complexity. 2 positions are modified to phosphoserine: S180 and S184. Phosphotyrosine is present on Y186. Phosphoserine occurs at positions 187, 188, and 191. A phosphothreonine mark is found at T194 and T201. Position 203 is a phosphoserine (S203). A Phosphothreonine modification is found at T206. K214 is subject to N6-acetyllysine. At T220 the chain carries Phosphothreonine. 2 positions are modified to phosphoserine: S224 and S226. Tau/MAP repeat units lie at residues 233–263 (QTAPVPMPDLKNVRSKIGSTENLKHQPGGGK), 264–294 (VQIINKKLDLSNVQSKCGSKDNIKHVPGGGS), 295–325 (VQIVYKPVDLSKVTSKCGSLGNIHHKPGGGQ), and 326–357 (VEVKSEKLDFKDRVQSKIGSLDNITHVPGGGN). Residue K243 forms a Glycyl lysine isopeptide (Lys-Gly) (interchain with G-Cter in ubiquitin) linkage. K248 carries the N6-acetyllysine; alternate modification. Residue K248 is modified to N6-methyllysine; alternate. K248 participates in a covalent cross-link: Glycyl lysine isopeptide (Lys-Gly) (interchain with G-Cter in ubiquitin); alternate. S251 carries the post-translational modification Phosphoserine. Residue K256 forms a Glycyl lysine isopeptide (Lys-Gly) (interchain with G-Cter in ubiquitin) linkage. K270 is subject to N6-acetyllysine; alternate. A Glycyl lysine isopeptide (Lys-Gly) (interchain with G-Cter in ubiquitin); alternate cross-link involves residue K270. Residues S274 and S278 each carry the phosphoserine modification. K279 is subject to N6-acetyllysine. C280 and C311 form a disulfide bridge. S282 is subject to Phosphoserine. Position 287 is an N6-acetyllysine; alternate (K287). K287 participates in a covalent cross-link: Glycyl lysine isopeptide (Lys-Gly) (interchain with G-Cter in ubiquitin); alternate. S294 carries the phosphoserine modification. K300 bears the N6,N6-dimethyllysine; alternate mark. An N6-acetyllysine; alternate mark is found at K300, K306, and K310. Residues K300, K306, and K310 each participate in a glycyl lysine isopeptide (Lys-Gly) (interchain with G-Cter in ubiquitin); alternate cross-link. The residue at position 313 (S313) is a Phosphoserine. N6-acetyllysine; alternate is present on residues K320, K332, and K336. Residues K320, K332, and K336 each participate in a glycyl lysine isopeptide (Lys-Gly) (interchain with G-Cter in ubiquitin); alternate cross-link. R338 is subject to Omega-N-methylarginine. S341 carries the post-translational modification Phosphoserine. Residue K342 forms a Glycyl lysine isopeptide (Lys-Gly) (interchain with G-Cter in ubiquitin) linkage. S345 is modified (phosphoserine). K358 carries the N6-acetyllysine; alternate modification. K358 participates in a covalent cross-link: Glycyl lysine isopeptide (Lys-Gly) (interchain with G-Cter in ubiquitin); alternate. K364 is covalently cross-linked (Glycyl lysine isopeptide (Lys-Gly) (interchain with G-Cter in ubiquitin)). Residue K374 is modified to N6-acetyllysine; alternate. K374 participates in a covalent cross-link: Glycyl lysine isopeptide (Lys-Gly) (interchain with G-Cter in ubiquitin); alternate. Y383 is subject to Phosphotyrosine. S385 and S389 each carry phosphoserine. Residues 387–406 (VVSGDTSPRHLSNVSSTGSI) form a disordered region. Residues 390 to 406 (GDTSPRHLSNVSSTGSI) show a composition bias toward polar residues. T392 carries the post-translational modification Phosphothreonine. S393, S398, S405, and S411 each carry phosphoserine. T416 is subject to Phosphothreonine.

In terms of assembly, interacts with MARK1, MARK2, MARK3 and MARK4. Interacts with SQSTM1 when polyubiquitinated. Interacts with PSMC2 through SQSTM1. Interacts with FKBP4. Binds to CSNK1D. Interacts with SGK1. Interacts with PIN1. Interacts with LRRK2. Interacts with LRP1, leading to endocytosis; this interaction is reduced in the presence of LRPAP1/RAP. Post-translationally, polyubiquitinated. Requires functional TRAF6 and may provoke SQSTM1-dependent degradation by the proteasome. Phosphorylation at various serine and threonine residues in S-P or T-P motifs by proline-directed protein kinases (PDPK1, CDK1, CDK5, GSK3, MAPK) (a few sites per protein in interphase, more in mitosis), and at serine residues in K-X-G-S motifs by MAP/microtubule affinity-regulating kinase (MARK1, MARK2, MARK3 or MARK4), causing detachment from microtubules, and their disassembly. Phosphorylation at Ser-345 by BRSK1 and BRSK2 in neurons affects ability to bind microtubules and plays a role in neuron polarization. Phosphorylated by PHK. Dephosphorylation at several serine and threonine residues by the serine/threonine phosphatase PPP5C. In terms of processing, hyperphosphorylated (in particular at Thr-170, Ser-191, Thr-194, Ser-251, and Ser-345) during hibernation. Phosphorylation is fully reversible after arousal. Highly phosphorylated tau contains a number of paired helical filaments (PHFs)-like epitopes. PHF-like phosphorylation is not associated with fibril formation. Distribution of PHF-like tau is more intense in the entorhinal cortex, hippocampus and isocortical areas. PHF-like phosphorylation-dephosphorylation during hibernation cycle is synchronized with regression-re-establishment of afferentation. It may reflect a protective mechanism in an unfavorable environment.

The protein localises to the cytoplasm. Its subcellular location is the cytosol. It localises to the cell membrane. The protein resides in the cytoskeleton. It is found in the cell projection. The protein localises to the axon. Its subcellular location is the dendrite. Its function is as follows. Promotes microtubule assembly and stability, and might be involved in the establishment and maintenance of neuronal polarity. The C-terminus binds axonal microtubules while the N-terminus binds neural plasma membrane components, suggesting that tau functions as a linker protein between both. Axonal polarity is predetermined by tau localization (in the neuronal cell) in the domain of the cell body defined by the centrosome. The short isoforms allow plasticity of the cytoskeleton whereas the longer isoforms may preferentially play a role in its stabilization. The protein is Microtubule-associated protein tau (MAPT) of Spermophilus citellus (European ground squirrel).